Consider the following 332-residue polypeptide: Phosphate acyltransferase (332 aa).

It belongs to the PlsX family. In terms of assembly, homodimer. Probably interacts with PlsY.

The protein resides in the cytoplasm. The enzyme catalyses a fatty acyl-[ACP] + phosphate = an acyl phosphate + holo-[ACP]. It participates in lipid metabolism; phospholipid metabolism. Catalyzes the reversible formation of acyl-phosphate (acyl-PO(4)) from acyl-[acyl-carrier-protein] (acyl-ACP). This enzyme utilizes acyl-ACP as fatty acyl donor, but not acyl-CoA. This chain is Phosphate acyltransferase, found in Clostridium novyi (strain NT).